A 181-amino-acid chain; its full sequence is Peptide deformylase (181 aa).

Fe cation is bound by residues Cys-103 and His-145. Glu-146 is an active-site residue. Residue His-149 participates in Fe cation binding.

The protein belongs to the polypeptide deformylase family. Fe(2+) serves as cofactor.

It catalyses the reaction N-terminal N-formyl-L-methionyl-[peptide] + H2O = N-terminal L-methionyl-[peptide] + formate. In terms of biological role, removes the formyl group from the N-terminal Met of newly synthesized proteins. Requires at least a dipeptide for an efficient rate of reaction. N-terminal L-methionine is a prerequisite for activity but the enzyme has broad specificity at other positions. The chain is Peptide deformylase from Orientia tsutsugamushi (strain Boryong) (Rickettsia tsutsugamushi).